The sequence spans 240 residues: Large ribosomal subunit protein uL1c (240 aa).

This sequence belongs to the universal ribosomal protein uL1 family. As to quaternary structure, part of the 50S ribosomal subunit.

Its subcellular location is the plastid. It is found in the chloroplast. Functionally, binds directly to 23S rRNA. Might be involved in E site tRNA release (Potential). The protein is Large ribosomal subunit protein uL1c (rpl1) of Cyanidium caldarium (Red alga).